Consider the following 352-residue polypeptide: Cuticle collagen dpy-17 (352 aa).

Positions 1–29 are cleaved as a signal peptide; it reads MSVFAGYAACTLGAVSMLLCVSLVPQVYQ. The tract at residues 61-64 is furin-like endopeptidase recognition region; that stretch reads RVRR. Disordered regions lie at residues 73-143 and 156-352; these read GGYG…GPGD and GPAG…GYRN. The span at 87 to 97 shows a compositional bias: gly residues; that stretch reads GPHGGFPGGPQ. Triple-helical region stretches follow at residues 156-182, 202-264, 267-290, and 294-329; these read GPAG…DGED, GPQG…DVEH, GLPG…QGDR, and GIAG…PGQD. A Collagen-like domain is found at 202 to 259; it reads GPQGPPGSQGKPGARGMRGARGQAAMPGRDGSPGMPGSLGPIGPPGAAGEEGPTGEPG. Positions 207 to 259 are enriched in low complexity; the sequence is PGSQGKPGARGMRGARGQAAMPGRDGSPGMPGSLGPIGPPGAAGEEGPTGEPG. Polar residues predominate over residues 337 to 352; that stretch reads QRNTNAAVSGNQGYRN.

Belongs to the cuticular collagen family. In terms of assembly, collagen polypeptide chains are complexed within the cuticle by disulfide bonds and other types of covalent cross-links.

It localises to the secreted. The protein resides in the extracellular space. Its function is as follows. Secreted collagen that forms part of the nematode cuticle, which functions as an exoskeleton and a barrier to protect the worm from its environment. Secretion and subsequent incorporation into the cuticle is likely mediated by bli-4, which probably cleaves at the N-terminal consensus furin cleavage site. The polypeptide is Cuticle collagen dpy-17 (Caenorhabditis elegans).